Consider the following 144-residue polypeptide: Transcription antitermination protein NusB (144 aa).

It belongs to the NusB family.

In terms of biological role, involved in transcription antitermination. Required for transcription of ribosomal RNA (rRNA) genes. Binds specifically to the boxA antiterminator sequence of the ribosomal RNA (rrn) operons. This Haemophilus influenzae (strain PittEE) protein is Transcription antitermination protein NusB.